The sequence spans 457 residues: Bifunctional protein GlmU (457 aa).

The segment at 1–232 (MNNLAAVILA…PAEVMGINDR (232 aa)) is pyrophosphorylase. UDP-N-acetyl-alpha-D-glucosamine is bound by residues 9 to 12 (LAAG), Lys-23, Gln-75, and 80 to 81 (GT). Asp-105 serves as a coordination point for Mg(2+). UDP-N-acetyl-alpha-D-glucosamine contacts are provided by Gly-142, Glu-157, Asn-172, and Asn-230. Position 230 (Asn-230) interacts with Mg(2+). Positions 233–253 (AQLAEAGQLLRGRINKALMLD) are linker. Positions 254-457 (GTTLIDPQTT…NKEGWKLKKK (204 aa)) are N-acetyltransferase. UDP-N-acetyl-alpha-D-glucosamine is bound by residues Arg-336 and Lys-354. The Proton acceptor role is filled by His-366. UDP-N-acetyl-alpha-D-glucosamine-binding residues include Tyr-369 and Asn-380. Acetyl-CoA contacts are provided by residues 389–390 (NY), Ser-408, Ala-426, and Arg-443.

This sequence in the N-terminal section; belongs to the N-acetylglucosamine-1-phosphate uridyltransferase family. In the C-terminal section; belongs to the transferase hexapeptide repeat family. Homotrimer. The cofactor is Mg(2+).

The protein resides in the cytoplasm. The catalysed reaction is alpha-D-glucosamine 1-phosphate + acetyl-CoA = N-acetyl-alpha-D-glucosamine 1-phosphate + CoA + H(+). The enzyme catalyses N-acetyl-alpha-D-glucosamine 1-phosphate + UTP + H(+) = UDP-N-acetyl-alpha-D-glucosamine + diphosphate. It participates in nucleotide-sugar biosynthesis; UDP-N-acetyl-alpha-D-glucosamine biosynthesis; N-acetyl-alpha-D-glucosamine 1-phosphate from alpha-D-glucosamine 6-phosphate (route II): step 2/2. It functions in the pathway nucleotide-sugar biosynthesis; UDP-N-acetyl-alpha-D-glucosamine biosynthesis; UDP-N-acetyl-alpha-D-glucosamine from N-acetyl-alpha-D-glucosamine 1-phosphate: step 1/1. Its pathway is bacterial outer membrane biogenesis; LPS lipid A biosynthesis. Catalyzes the last two sequential reactions in the de novo biosynthetic pathway for UDP-N-acetylglucosamine (UDP-GlcNAc). The C-terminal domain catalyzes the transfer of acetyl group from acetyl coenzyme A to glucosamine-1-phosphate (GlcN-1-P) to produce N-acetylglucosamine-1-phosphate (GlcNAc-1-P), which is converted into UDP-GlcNAc by the transfer of uridine 5-monophosphate (from uridine 5-triphosphate), a reaction catalyzed by the N-terminal domain. The chain is Bifunctional protein GlmU from Geotalea uraniireducens (strain Rf4) (Geobacter uraniireducens).